A 1010-amino-acid chain; its full sequence is Antigenic heat-stable 120 kDa protein (1010 aa).

Disordered stretches follow at residues 1 to 34 (DTSE…QTTT) and 347 to 396 (GQSK…QSQQ). Basic and acidic residues predominate over residues 12-27 (EYTEEQKQTLEQEQKE). Composition is skewed to polar residues over residues 347-372 (GQSK…QHKQ) and 379-396 (PTNQ…QSQQ).

It is found in the cytoplasm. The polypeptide is Antigenic heat-stable 120 kDa protein (sca4) (Rickettsia parkeri).